Consider the following 161-residue polypeptide: UPF0178 protein PXO_00400 (161 aa).

This sequence belongs to the UPF0178 family.

The sequence is that of UPF0178 protein PXO_00400 from Xanthomonas oryzae pv. oryzae (strain PXO99A).